Consider the following 210-residue polypeptide: Floral homeotic protein FBP1 (210 aa).

The region spanning 3–57 (RGKIEIKRIENSSNRQVTYSKRRNGILKKAKEISVLCDARVSVIIFASSGKMHEF) is the MADS-box domain. The region spanning 82-173 (HENLDNEINK…QLEIATMNRN (92 aa)) is the K-box domain.

Petals.

It is found in the nucleus. Functionally, probable transcription factor. The sequence is that of Floral homeotic protein FBP1 (FBP1) from Petunia hybrida (Petunia).